A 342-amino-acid polypeptide reads, in one-letter code: Large ribosomal subunit protein uL3 (342 aa).

The tract at residues 1 to 22 (MGHRKLSSPRRGSAGLRPRKRA) is disordered.

It belongs to the universal ribosomal protein uL3 family. Part of the 50S ribosomal subunit. Forms a cluster with proteins L14 and L24e.

Functionally, one of the primary rRNA binding proteins, it binds directly near the 3'-end of the 23S rRNA, where it nucleates assembly of the 50S subunit. This chain is Large ribosomal subunit protein uL3, found in Sulfolobus acidocaldarius (strain ATCC 33909 / DSM 639 / JCM 8929 / NBRC 15157 / NCIMB 11770).